The sequence spans 205 residues: Ras-related protein RABB1a (205 aa).

Residue 13-20 (GDTGVGKS) coordinates GTP. An Effector region motif is present at residues 35 to 43 (HDLTIGVEF). GTP-binding positions include 61-65 (DTAGQ), 119-122 (NKCD), and 149-150 (SA). Positions 179–205 (ANEPGITPGPFGGKDASSSQQRRGCCG) are disordered. The segment covering 194 to 205 (ASSSQQRRGCCG) has biased composition (polar residues). 2 S-geranylgeranyl cysteine lipidation sites follow: Cys-203 and Cys-204.

Belongs to the small GTPase superfamily. Rab family.

It is found in the cell membrane. Its function is as follows. Intracellular vesicle trafficking and protein transport. The sequence is that of Ras-related protein RABB1a (RABB1A) from Arabidopsis thaliana (Mouse-ear cress).